The following is a 259-amino-acid chain: Thiazole synthase (259 aa).

Lysine 100 (schiff-base intermediate with DXP) is an active-site residue. Residues glycine 161, 187 to 188, and 209 to 210 contribute to the 1-deoxy-D-xylulose 5-phosphate site; these read AG and AS.

This sequence belongs to the ThiG family. Homotetramer. Forms heterodimers with either ThiH or ThiS.

Its subcellular location is the cytoplasm. The catalysed reaction is [ThiS sulfur-carrier protein]-C-terminal-Gly-aminoethanethioate + 2-iminoacetate + 1-deoxy-D-xylulose 5-phosphate = [ThiS sulfur-carrier protein]-C-terminal Gly-Gly + 2-[(2R,5Z)-2-carboxy-4-methylthiazol-5(2H)-ylidene]ethyl phosphate + 2 H2O + H(+). It participates in cofactor biosynthesis; thiamine diphosphate biosynthesis. Catalyzes the rearrangement of 1-deoxy-D-xylulose 5-phosphate (DXP) to produce the thiazole phosphate moiety of thiamine. Sulfur is provided by the thiocarboxylate moiety of the carrier protein ThiS. In vitro, sulfur can be provided by H(2)S. The protein is Thiazole synthase of Salinispora arenicola (strain CNS-205).